A 299-amino-acid polypeptide reads, in one-letter code: Tyrosine recombinase XerC (299 aa).

The 85-residue stretch at 1–85 (MERQLEAYCA…AVRGLYRYLN (85 aa)) folds into the Core-binding (CB) domain. The Tyr recombinase domain maps to 106 to 285 (RLPKTLDTDR…DFQHLAAVYD (180 aa)). Catalysis depends on residues Arg-146, Lys-170, His-237, Arg-240, and His-263. Tyr-272 (O-(3'-phospho-DNA)-tyrosine intermediate) is an active-site residue.

This sequence belongs to the 'phage' integrase family. XerC subfamily. In terms of assembly, forms a cyclic heterotetrameric complex composed of two molecules of XerC and two molecules of XerD.

Its subcellular location is the cytoplasm. Site-specific tyrosine recombinase, which acts by catalyzing the cutting and rejoining of the recombining DNA molecules. The XerC-XerD complex is essential to convert dimers of the bacterial chromosome into monomers to permit their segregation at cell division. It also contributes to the segregational stability of plasmids. The sequence is that of Tyrosine recombinase XerC from Pseudomonas entomophila (strain L48).